The sequence spans 268 residues: Aliphatic sulfonates import ATP-binding protein SsuB 2 (268 aa).

Residues 15–236 (LAVRKLQKTF…VRGSHRLAAL (222 aa)) form the ABC transporter domain. ATP is bound at residue 47 to 54 (GRSGCGKS).

The protein belongs to the ABC transporter superfamily. Aliphatic sulfonates importer (TC 3.A.1.17.2) family. As to quaternary structure, the complex is composed of two ATP-binding proteins (SsuB), two transmembrane proteins (SsuC) and a solute-binding protein (SsuA).

Its subcellular location is the cell inner membrane. It carries out the reaction ATP + H2O + aliphatic sulfonate-[sulfonate-binding protein]Side 1 = ADP + phosphate + aliphatic sulfonateSide 2 + [sulfonate-binding protein]Side 1.. Part of the ABC transporter complex SsuABC involved in aliphatic sulfonates import. Responsible for energy coupling to the transport system. The protein is Aliphatic sulfonates import ATP-binding protein SsuB 2 of Pseudomonas fluorescens (strain ATCC BAA-477 / NRRL B-23932 / Pf-5).